Reading from the N-terminus, the 55-residue chain is Small ribosomal subunit protein eS31 (55 aa).

Residues C26, C29, C44, and C47 each coordinate Zn(2+).

This sequence belongs to the eukaryotic ribosomal protein eS31 family. As to quaternary structure, part of the 30S ribosomal subunit. Requires Zn(2+) as cofactor.

This chain is Small ribosomal subunit protein eS31, found in Archaeoglobus fulgidus (strain ATCC 49558 / DSM 4304 / JCM 9628 / NBRC 100126 / VC-16).